Consider the following 778-residue polypeptide: Gelsolin (778 aa).

The signal sequence occupies residues 1-23 (MGKQGFGYIFLTIFCTMALKLNC). The actin-severing stretch occupies residues 49-172 (MVEHAEFSKA…YKAGGVASGF (124 aa)). The Gelsolin-like 1 repeat unit spans residues 72-154 (FDLVPVPKNL…VQGHESSTFL (83 aa)). Ca(2+) contacts are provided by glycine 88, aspartate 89, glutamate 120, aspartate 132, glycine 137, and alanine 139. The actin-actin interfilament contact point stretch occupies residues 119–122 (DERG). 158–165 (KSGIKYKA) lines the a 1,2-diacyl-sn-glycero-3-phospho-(1D-myo-inositol-4,5-bisphosphate) pocket. Ca(2+) is bound at residue valine 168. 184 to 192 (RLLQVKGRR) contacts a 1,2-diacyl-sn-glycero-3-phospho-(1D-myo-inositol-4,5-bisphosphate). A Gelsolin-like 2 repeat occupies 193 to 266 (TVRATEVPVS…SEEGAEREEM (74 aa)). Ca(2+)-binding residues include glycine 209 and aspartate 210. An intrachain disulfide couples cysteine 211 to cysteine 224. The Ca(2+) site is built by glutamate 232, aspartate 282, glutamate 325, aspartate 326, glutamate 350, glycine 467, aspartate 468, glutamate 498, aspartate 510, glycine 515, proline 517, threonine 547, asparagine 587, aspartate 588, glutamate 610, aspartate 692, aspartate 693, and glutamate 715. 2 Gelsolin-like repeats span residues 313 to 385 (DENP…TPLF) and 451 to 532 (SEKV…PHLM). The tract at residues 430–778 (AAQHGMEDDG…LQRAMADVDV (349 aa)) is actin-binding, Ca-sensitive. 2 Gelsolin-like repeats span residues 574–638 (AVEL…DNFW) and 677–752 (IEEV…PPTF).

The protein belongs to the villin/gelsolin family. In terms of assembly, binds to actin and to fibronectin. As to expression, highly expressed in homogene cells of the basilar papilla. Also detected in subcutaneous layer of the skin.

The protein localises to the secreted. Its subcellular location is the cytoplasm. It localises to the cytoskeleton. Functionally, calcium-regulated, actin-modulating protein that binds to the plus (or barbed) ends of actin monomers or filaments, preventing monomer exchange (end-blocking or capping). It can promote the assembly of monomers into filaments (nucleation) as well as sever filaments already formed. Plays a role in ciliogenesis. In Gallus gallus (Chicken), this protein is Gelsolin (GSN).